The primary structure comprises 635 residues: Phosphatidylserine decarboxylase proenzyme 2 (635 aa).

Positions 20 to 146 constitute a C2 domain; sequence KLQKFRIHRR…VVQEPESTCK (127 aa). 2 EF-hand domains span residues 174–209 and 210–245; these read TERR…FGNL and VAAN…QQEQ. 9 residues coordinate Ca(2+): Asp187, Asn189, Asp191, Gln193, Glu198, Asp223, Asn225, Asp227, and Glu234. Active-site charge relay system; for autoendoproteolytic cleavage activity residues include Asp443, His499, and Ser587. The active-site Schiff-base intermediate with substrate; via pyruvic acid; for decarboxylase activity is Ser587. Ser587 is modified (pyruvic acid (Ser); by autocatalysis).

This sequence belongs to the phosphatidylserine decarboxylase family. PSD-B subfamily. Eukaryotic type II sub-subfamily. Heterodimer of a large membrane-associated beta subunit and a small pyruvoyl-containing alpha subunit. Pyruvate serves as cofactor. Post-translationally, is synthesized initially as an inactive proenzyme. Formation of the active enzyme involves a self-maturation process in which the active site pyruvoyl group is generated from an internal serine residue via an autocatalytic post-translational modification. Two non-identical subunits are generated from the proenzyme in this reaction, and the pyruvate is formed at the N-terminus of the alpha chain, which is derived from the carboxyl end of the proenzyme. The autoendoproteolytic cleavage occurs by a canonical serine protease mechanism, in which the side chain hydroxyl group of the serine supplies its oxygen atom to form the C-terminus of the beta chain, while the remainder of the serine residue undergoes an oxidative deamination to produce ammonia and the pyruvoyl prosthetic group on the alpha chain. During this reaction, the Ser that is part of the protease active site of the proenzyme becomes the pyruvoyl prosthetic group, which constitutes an essential element of the active site of the mature decarboxylase. In terms of tissue distribution, highly expressed in flowers and at lower levels in leaves.

It localises to the vacuole membrane. It carries out the reaction a 1,2-diacyl-sn-glycero-3-phospho-L-serine + H(+) = a 1,2-diacyl-sn-glycero-3-phosphoethanolamine + CO2. The protein operates within phospholipid metabolism; phosphatidylethanolamine biosynthesis; phosphatidylethanolamine from CDP-diacylglycerol: step 2/2. Its function is as follows. Catalyzes the formation of phosphatidylethanolamine (PtdEtn) from phosphatidylserine (PtdSer). Plays a central role in phospholipid metabolism and in the interorganelle trafficking of phosphatidylserine. Contributes only to a minor proportion of PtdEtn production. The protein is Phosphatidylserine decarboxylase proenzyme 2 (PSD2) of Arabidopsis thaliana (Mouse-ear cress).